A 557-amino-acid chain; its full sequence is MESERSKRMGNACIPLKRIAYFLCLLSALLLTEGKKPAKPKCPAVCTCTKDNALCENARSIPRTVPPDVISLSFVRSGFTEISEGSFLFTPSLQLLLFTSNSFDVISDDAFIGLPHLEYLFIENNNIKSISRHTFRGLKSLIHLSLANNNLQTLPKDIFKGLDSLTNVDLRGNSFNCDCKLKWLVEWLGHTNATVEDIYCEGPPEYKKRKINSLSSKDFDCIITEFAKSQDLPYQSLSIDTFSYLNDEYVVIAQPFTGKCIFLEWDHVEKTFRNYDNITGTSTVVCKPIVIETQLYVIVAQLFGGSHIYKRDSFANKFIKIQDIEILKIRKPNDIETFKIENNWYFVVADSSKAGFTTIYKWNGNGFYSHQSLHAWYRDTDVEYLEIVRTPQTLRTPHLILSSSSQRPVIYQWNKATQSFTNQTDIPNMEDVYAVKHFSVKGDVYICLTRFIGDSKVMKWGGSSFQDIQRMPSRGSMVFQPLQINNYQYAILGSDYSFTQVYNWDAEKAKFVKFQELNVQAPRSFTHVSINKRNFLFASSFKGNTQIYKHVIVDLSA.

Positions 1–34 are cleaved as a signal peptide; sequence MESERSKRMGNACIPLKRIAYFLCLLSALLLTEG. An LRRNT domain is found at 35-72; it reads KKPAKPKCPAVCTCTKDNALCENARSIPRTVPPDVISL. LRR repeat units lie at residues 92 to 113, 116 to 137, and 140 to 161; these read SLQL…AFIG, HLEY…TFRG, and SLIH…IFKG. Positions 173 to 223 constitute an LRRCT domain; that stretch reads NSFNCDCKLKWLVEWLGHTNATVEDIYCEGPPEYKKRKINSLSSKDFDCII. N-linked (GlcNAc...) asparagine glycosylation is present at Asn-192. EAR repeat units lie at residues 225 to 267, 271 to 313, 317 to 364, 366 to 415, 419 to 462, 464 to 506, and 510 to 552; these read EFAK…EWDH, TFRN…KRDS, KFIK…KWNG, GFYS…QWNK, SFTN…KWGG, SFQD…NWDA, and KFVK…KHVI. Asn-277 carries an N-linked (GlcNAc...) asparagine glycan. Residue Asn-422 is glycosylated (N-linked (GlcNAc...) asparagine).

Oligomer. Interacts with KCNA1 within a complex containing KCNA1, KCNA4 and KCNAB1. Part of a complex containing ADAM22, DLG4/PSD95 and CACNG2 (stargazin). Can bind to ADAM11 and ADAM23. In terms of processing, glycosylated.

It is found in the secreted. The protein resides in the synapse. It localises to the cytoplasm. In terms of biological role, regulates voltage-gated potassium channels assembled from KCNA1, KCNA4 and KCNAB1. It slows down channel inactivation by precluding channel closure mediated by the KCNAB1 subunit. Ligand for ADAM22 that positively regulates synaptic transmission mediated by AMPA-type glutamate receptors. Plays a role in suppressing the production of MMP1/3 through the phosphatidylinositol 3-kinase/ERK pathway. This is Leucine-rich glioma-inactivated protein 1 (LGI1) from Pan troglodytes (Chimpanzee).